The chain runs to 807 residues: MKEWKSKMEISEEKKSARAASEKLQRQITQECELVETSNSEDRLLKHWVSPLKDAMRHLPSQESGIREMHIIPQKAIVGEIGHGCNEGEKILSAGESSHRYEVSGQNFKQKSGLTEHQKIHNINKTYECKECEKTFNRSSNLIIHQRIHTGNKPYVCNECGKDSNQSSNLIIHQRIHTGKKPYICHECGKDFNQSSNLVRHKQIHSGGNPYECKECGKAFKGSSNLVLHQRIHSRGKPYLCNKCGKAFSQSTDLIIHHRIHTGEKPYECYDCGQMFSQSSHLVPHQRIHTGEKPLKCNECEKAFRQHSHLTEHQRLHSGEKPYECHRCGKTFSGRTAFLKHQRLHAGEKIEECEKTFSKDEELREEQRIHQEEKAYWCNQCGRNFQGTSDLIRHQVTHTGEKPYECKECGKTFNQSSDLLRHHRIHSGEKPCVCSKCGKSFRGSSDLIRHHRVHTGEKPYECSECGKAFSQRSHLVTHQKIHTGEKPYQCTECGKAFRRRSLLIQHRRIHSGEKPYECKECGKLFIWRTAFLKHQSLHTGEKLECEKTFSQDEELRGEQKIHQEAKAYWCNQCGRAFQGSSDLIRHQVTHTREKPYECKECGKTFNQSSDLLRHHRIHSGEKPYVCNKCGKSFRGSSDLIKHHRIHTGEKPYECSECGKAFSQRSHLATHQKIHTGEKPYQCSECGNAFRRRSLLIQHRRLHSGEKPYECKECGKLFMWHTAFLKHQRLHAGEKLEECEKTFSKDEELRKEQRTHQEKKVYWCNQCSRTFQGSSDLIRHQVTHTREKPYECKECGKTQSELRPSETS.

A disordered region spans residues 1-23 (MKEWKSKMEISEEKKSARAASEK). 8 C2H2-type zinc fingers span residues 127 to 149 (YECKECEKTFNRSSNLIIHQRIH), 155 to 177 (YVCNECGKDSNQSSNLIIHQRIH), 183 to 205 (YICHECGKDFNQSSNLVRHKQIH), 211 to 233 (YECKECGKAFKGSSNLVLHQRIH), 239 to 261 (YLCNKCGKAFSQSTDLIIHHRIH), 267 to 289 (YECYDCGQMFSQSSHLVPHQRIH), 295 to 317 (LKCNECEKAFRQHSHLTEHQRLH), and 323 to 345 (YECHRCGKTFSGRTAFLKHQRLH). A C2H2-type 9; degenerate zinc finger spans residues 348-370 (EKIEECEKTFSKDEELREEQRIH). C2H2-type zinc fingers lie at residues 376-398 (YWCNQCGRNFQGTSDLIRHQVTH), 404-426 (YECKECGKTFNQSSDLLRHHRIH), 432-454 (CVCSKCGKSFRGSSDLIRHHRVH), 460-482 (YECSECGKAFSQRSHLVTHQKIH), 488-510 (YQCTECGKAFRRRSLLIQHRRIH), and 516-538 (YECKECGKLFIWRTAFLKHQSLH). Residues 543 to 562 (LECEKTFSQDEELRGEQKIH) form a C2H2-type 16; degenerate zinc finger. 6 C2H2-type zinc fingers span residues 568–590 (YWCNQCGRAFQGSSDLIRHQVTH), 596–618 (YECKECGKTFNQSSDLLRHHRIH), 624–646 (YVCNKCGKSFRGSSDLIKHHRIH), 652–674 (YECSECGKAFSQRSHLATHQKIH), 680–702 (YQCSECGNAFRRRSLLIQHRRLH), and 708–730 (YECKECGKLFMWHTAFLKHQRLH). The C2H2-type 23; degenerate zinc-finger motif lies at 733–755 (EKLEECEKTFSKDEELRKEQRTH). The segment at 761-783 (YWCNQCSRTFQGSSDLIRHQVTH) adopts a C2H2-type 24 zinc-finger fold.

It belongs to the krueppel C2H2-type zinc-finger protein family.

It is found in the nucleus. Its function is as follows. May be involved in transcriptional regulation. The protein is Zinc finger protein 594 (ZNF594) of Homo sapiens (Human).